The primary structure comprises 227 residues: Probable cell wall protein PGA42 (227 aa).

The signal sequence occupies residues 1-16 (MKFIILLFALIHITVA). Asparagine 192 carries N-linked (GlcNAc...) asparagine glycosylation. A lipid anchor (GPI-anchor amidated serine) is attached at serine 200. Positions 201–227 (GSQIFVLCVISVVGFIFFFLFFLSLFV) are cleaved as a propeptide — removed in mature form.

The protein belongs to the IHD1 family. In terms of processing, the GPI-anchor is attached to the protein in the endoplasmic reticulum and serves to target the protein to the cell surface. There, the glucosamine-inositol phospholipid moiety is cleaved off and the GPI-modified mannoprotein is covalently attached via its lipidless GPI glycan remnant to the 1,6-beta-glucan of the outer cell wall layer.

The protein localises to the secreted. The protein resides in the cell wall. It is found in the membrane. Functionally, probable GPI-anchored cell wall protein that may be involved in cell wall organization, hyphal growth, as well as in virulence. This chain is Probable cell wall protein PGA42 (PGA42), found in Candida albicans (strain SC5314 / ATCC MYA-2876) (Yeast).